Consider the following 245-residue polypeptide: NAD-dependent protein deacylase (245 aa).

The 237-residue stretch at 1 to 237 folds into the Deacetylase sirtuin-type domain; it reads MNFPYRNIVV…PKLVEELLAH (237 aa). An NAD(+)-binding site is contributed by 13–32; that stretch reads GAGISAESGIQTFRAQDGLW. Tyr-57 and Arg-60 together coordinate substrate. 94 to 97 contributes to the NAD(+) binding site; it reads QNID. His-112 serves as the catalytic Proton acceptor. Positions 120 and 139 each coordinate Zn(2+). NAD(+) contacts are provided by residues 179–181, 205–207, and Ala-223; these read GTS and NLE.

It belongs to the sirtuin family. Class III subfamily. Zn(2+) is required as a cofactor.

Its subcellular location is the cytoplasm. The catalysed reaction is N(6)-acetyl-L-lysyl-[protein] + NAD(+) + H2O = 2''-O-acetyl-ADP-D-ribose + nicotinamide + L-lysyl-[protein]. It carries out the reaction N(6)-succinyl-L-lysyl-[protein] + NAD(+) + H2O = 2''-O-succinyl-ADP-D-ribose + nicotinamide + L-lysyl-[protein]. NAD-dependent lysine deacetylase and desuccinylase that specifically removes acetyl and succinyl groups on target proteins. Modulates the activities of several proteins which are inactive in their acylated form. The protein is NAD-dependent protein deacylase of Vibrio vulnificus (strain CMCP6).